Here is a 213-residue protein sequence, read N- to C-terminus: Small ribosomal subunit protein uS3 (213 aa).

The region spanning Ile38–Arg106 is the KH type-2 domain.

Belongs to the universal ribosomal protein uS3 family. In terms of assembly, part of the 30S ribosomal subunit. Forms a tight complex with proteins S10 and S14.

In terms of biological role, binds the lower part of the 30S subunit head. Binds mRNA in the 70S ribosome, positioning it for translation. This chain is Small ribosomal subunit protein uS3, found in Maridesulfovibrio salexigens (strain ATCC 14822 / DSM 2638 / NCIMB 8403 / VKM B-1763) (Desulfovibrio salexigens).